The chain runs to 441 residues: DNA double-strand break repair protein Mre11 (441 aa).

Positions 9, 11, 50, and 85 each coordinate Mn(2+). Residue histidine 86 is the Proton donor of the active site. Mn(2+) is bound by residues histidine 150, aspartate 181, and histidine 183. The segment at 360 to 441 (ESLLSDDPDA…SRDSSLGDFA (82 aa)) is disordered. 2 stretches are compositionally biased toward acidic residues: residues 379–403 (AEAE…EDTA) and 411–425 (TDTD…DSET).

The protein belongs to the MRE11/RAD32 family. In terms of assembly, homodimer. Forms a heterotetramer composed of two Mre11 subunits and two Rad50 subunits. It depends on Mn(2+) as a cofactor.

With respect to regulation, nuclease activity is regulated by Rad50. Part of the Rad50/Mre11 complex, which is involved in the early steps of DNA double-strand break (DSB) repair. Mre11 binds to DSB ends and has both double-stranded 3'-5' exonuclease activity and single-stranded endonuclease activity. In polyploid organisms, the Rad50/Mre11 complex appears to restrain the repair of double-strand breaks by homologous recombination, allowing another pathway to act as the primary mode of repair. This chain is DNA double-strand break repair protein Mre11, found in Haloferax volcanii (strain ATCC 29605 / DSM 3757 / JCM 8879 / NBRC 14742 / NCIMB 2012 / VKM B-1768 / DS2) (Halobacterium volcanii).